A 2525-amino-acid chain; its full sequence is Highly reducing polyketide synthase cm3B (2525 aa).

The span at 1–10 (MQSDTNNSPL) shows a compositional bias: polar residues. Residues 1 to 29 (MQSDTNNSPLSWEELRSGAASSDANSSPP) form a disordered region. A Ketosynthase family 3 (KS3) domain is found at 29–450 (PEPIAIIGMS…GTNAHVVVDA (422 aa)). Residues Cys-202, His-336, and His-376 each act as for beta-ketoacyl synthase activity in the active site. The malonyl-CoA:ACP transacylase (MAT) domain stretch occupies residues 560-895 (VFSGQGSQYA…FLECLGALHV (336 aa)). The tract at residues 949–1087 (HELLGTFAHD…GLVHAETQAA (139 aa)) is N-terminal hotdog fold. Residues 949–1252 (HELLGTFAHD…AKGVHTTTLP (304 aa)) are dehydratase (DH) domain. The 309-residue stretch at 949–1257 (HELLGTFAHD…TTTLPGDTGL (309 aa)) folds into the PKS/mFAS DH domain. His-981 serves as the catalytic Proton acceptor; for dehydratase activity. The interval 1107–1257 (VHEVTPQKLY…TTTLPGDTGL (151 aa)) is C-terminal hotdog fold. The Proton donor; for dehydratase activity role is filled by Asp-1169. Residues 1399 to 1504 (LEVGAGTASA…KKLLKPGGKF (106 aa)) form a methyltransferase (CMet) domain region. The enoyl reductase (ER) domain stretch occupies residues 1799–2111 (GLLESIRWKD…AGKHTGKIVL (313 aa)). The 79-residue stretch at 2411 to 2489 (AQLLENISQL…ELAKIIAKES (79 aa)) folds into the Carrier domain. The segment at 2411–2489 (AQLLENISQL…ELAKIIAKES (79 aa)) is ketoreductase (KR) domain. Ser-2449 is subject to O-(pantetheine 4'-phosphoryl)serine.

The protein operates within secondary metabolite biosynthesis. Functionally, highly reducing polyketide synthase; part of the gene cluster that mediates the biosynthesis of beauveriolides I and III, cyclodepsipeptides acting as inhibitors of the acyl-CoA:cholesterol acyltransferase. The HR-PKS cm3B initiates the biosynthesis of beauveriolides by iteratively catalyzing the formation of the linear polyketide chain. The ATP-dependent acetyl-CoA ligase cm3D converts the polyketide carboxylic acid to a CoA thioester which id shuttled to the first T domain in the NRPS cm3A by the acetyltransferase cm3C. Cm3A contains 13 domains and assembles the polyketide chain, L-phenylalanine, L-alanine, and D-leucine (or D-allo-isoleucine) to form beauveriolide I (or beauveriolide III). The production of both beauveriolides I and III suggests the substrate adaptability of cm3B, using different amino acids as substrates. The sequence is that of Highly reducing polyketide synthase cm3B from Cordyceps militaris (strain CM01) (Caterpillar fungus).